Consider the following 354-residue polypeptide: Nicotinate-nucleotide--dimethylbenzimidazole phosphoribosyltransferase (354 aa).

Glu322 acts as the Proton acceptor in catalysis.

The protein belongs to the CobT family.

It catalyses the reaction 5,6-dimethylbenzimidazole + nicotinate beta-D-ribonucleotide = alpha-ribazole 5'-phosphate + nicotinate + H(+). Its pathway is nucleoside biosynthesis; alpha-ribazole biosynthesis; alpha-ribazole from 5,6-dimethylbenzimidazole: step 1/2. In terms of biological role, catalyzes the synthesis of alpha-ribazole-5'-phosphate from nicotinate mononucleotide (NAMN) and 5,6-dimethylbenzimidazole (DMB). In Solidesulfovibrio magneticus (strain ATCC 700980 / DSM 13731 / RS-1) (Desulfovibrio magneticus), this protein is Nicotinate-nucleotide--dimethylbenzimidazole phosphoribosyltransferase.